A 198-amino-acid polypeptide reads, in one-letter code: NADH-quinone oxidoreductase subunit B 1 (198 aa).

4 residues coordinate [4Fe-4S] cluster: Cys77, Cys78, Cys142, and Cys172.

The protein belongs to the complex I 20 kDa subunit family. NDH-1 is composed of 14 different subunits. Subunits NuoB, C, D, E, F, and G constitute the peripheral sector of the complex. It depends on [4Fe-4S] cluster as a cofactor.

It localises to the cell inner membrane. It carries out the reaction a quinone + NADH + 5 H(+)(in) = a quinol + NAD(+) + 4 H(+)(out). In terms of biological role, NDH-1 shuttles electrons from NADH, via FMN and iron-sulfur (Fe-S) centers, to quinones in the respiratory chain. The immediate electron acceptor for the enzyme in this species is believed to be ubiquinone. Couples the redox reaction to proton translocation (for every two electrons transferred, four hydrogen ions are translocated across the cytoplasmic membrane), and thus conserves the redox energy in a proton gradient. The sequence is that of NADH-quinone oxidoreductase subunit B 1 from Rhodopseudomonas palustris (strain ATCC BAA-98 / CGA009).